The sequence spans 214 residues: LOB domain-containing protein 7 (214 aa).

The 102-residue stretch at 12 to 113 (TACAACKHQR…TELNLTRQQI (102 aa)) folds into the LOB domain.

The protein belongs to the LOB domain-containing protein family.

The polypeptide is LOB domain-containing protein 7 (LBD7) (Arabidopsis thaliana (Mouse-ear cress)).